We begin with the raw amino-acid sequence, 515 residues long: Probable NADPH:adrenodoxin oxidoreductase, mitochondrial (515 aa).

Ala52, Glu73, Leu81, and Ile119 together coordinate FAD. NADP(+) contacts are provided by residues 191-194, 236-237, and Glu248; these read QGNV and RR. FAD is bound by residues Trp419 and 426–428; that span reads GSI. Gly426 lines the NADP(+) pocket.

The protein belongs to the ferredoxin--NADP reductase type 1 family. It depends on FAD as a cofactor.

The protein resides in the mitochondrion inner membrane. It carries out the reaction 2 reduced [adrenodoxin] + NADP(+) + H(+) = 2 oxidized [adrenodoxin] + NADPH. In Dictyostelium discoideum (Social amoeba), this protein is Probable NADPH:adrenodoxin oxidoreductase, mitochondrial (fdxr).